A 250-amino-acid polypeptide reads, in one-letter code: Large ribosomal subunit protein uL29m (250 aa).

A mitochondrion-targeting transit peptide spans 1–24 (MRPGAASIRTTGSVLAFLVPSAQC). The tract at residues 66 to 86 (VLSKKGSGDQPPKPVPITEKV) is disordered.

Belongs to the universal ribosomal protein uL29 family. Component of the mitochondrial large ribosomal subunit. Mature mitochondrial ribosomes consist of a small (37S) and a large (54S) subunit. The 37S subunit contains at least 33 different proteins and 1 molecule of RNA (15S). The 54S subunit contains at least 45 different proteins and 1 molecule of RNA (21S).

It is found in the mitochondrion. This Phaeosphaeria nodorum (strain SN15 / ATCC MYA-4574 / FGSC 10173) (Glume blotch fungus) protein is Large ribosomal subunit protein uL29m (MRPL4).